Here is a 101-residue protein sequence, read N- to C-terminus: NADH-quinone oxidoreductase subunit K (101 aa).

Helical transmembrane passes span 4 to 24 (LSHY…GIFI), 30 to 50 (IVIL…LVAF), and 65 to 85 (FVLT…VVFF).

Belongs to the complex I subunit 4L family. NDH-1 is composed of 14 different subunits. Subunits NuoA, H, J, K, L, M, N constitute the membrane sector of the complex.

The protein localises to the cell inner membrane. It catalyses the reaction a quinone + NADH + 5 H(+)(in) = a quinol + NAD(+) + 4 H(+)(out). NDH-1 shuttles electrons from NADH, via FMN and iron-sulfur (Fe-S) centers, to quinones in the respiratory chain. The immediate electron acceptor for the enzyme in this species is believed to be ubiquinone. Couples the redox reaction to proton translocation (for every two electrons transferred, four hydrogen ions are translocated across the cytoplasmic membrane), and thus conserves the redox energy in a proton gradient. In Methylobacterium sp. (strain 4-46), this protein is NADH-quinone oxidoreductase subunit K.